A 324-amino-acid chain; its full sequence is O-ureido-L-serine synthase (324 aa).

The residue at position 43 (K43) is an N6-(pyridoxal phosphate)lysine. Pyridoxal 5'-phosphate-binding positions include N73, 177–181 (GTTGT), and S265.

The protein belongs to the cysteine synthase/cystathionine beta-synthase family. In terms of assembly, homotetramer. Requires pyridoxal 5'-phosphate as cofactor.

The enzyme catalyses hydroxyurea + O-acetyl-L-serine = O-ureido-L-serine + acetate + H(+). It catalyses the reaction O-acetyl-L-serine + hydrogen sulfide = L-cysteine + acetate. Involved in the biosynthesis of the antibiotic D-cycloserine (DCS), a cyclic structural analog of D-alanine, used as an antitubercular agent. Catalyzes the addition of hydroxyurea on O-acetyl-L-serine (OAS) to yield O-ureido-L-serine. It prefers sulfide as the second substrate, followed by hydroxyurea, L-homocysteine, and thiosulfate. This is O-ureido-L-serine synthase from Streptomyces lavendulae.